The following is a 365-amino-acid chain: uncharacterized protein (365 aa).

Disordered stretches follow at residues 119-157 (ERSR…QQES), 216-298 (RPPG…DISH), and 313-365 (SHHH…LSVG). Basic and acidic residues predominate over residues 326-340 (SDPRIESRDLPERPQ).

This is an uncharacterized protein from Homo sapiens (Human).